The chain runs to 435 residues: Gamma-glutamyl phosphate reductase (435 aa).

Belongs to the gamma-glutamyl phosphate reductase family.

It is found in the cytoplasm. It carries out the reaction L-glutamate 5-semialdehyde + phosphate + NADP(+) = L-glutamyl 5-phosphate + NADPH + H(+). It functions in the pathway amino-acid biosynthesis; L-proline biosynthesis; L-glutamate 5-semialdehyde from L-glutamate: step 2/2. Its function is as follows. Catalyzes the NADPH-dependent reduction of L-glutamate 5-phosphate into L-glutamate 5-semialdehyde and phosphate. The product spontaneously undergoes cyclization to form 1-pyrroline-5-carboxylate. In Synechococcus sp. (strain WH7803), this protein is Gamma-glutamyl phosphate reductase.